The following is a 199-amino-acid chain: Putative rhomboid protease YdcA (199 aa).

A run of 6 helical transmembrane segments spans residues 14-34, 65-85, 97-117, 122-142, 147-167, and 172-192; these read LYPV…FFSL, ILLH…FLFA, FLLV…VTEP, HVGA…MVLF, IGQE…LMSF, and INMM…FLCV. Ser126 acts as the Nucleophile in catalysis. His177 (charge relay system) is an active-site residue.

It belongs to the peptidase S54 family.

It localises to the cell membrane. The sequence is that of Putative rhomboid protease YdcA (ydcA) from Bacillus subtilis (strain 168).